We begin with the raw amino-acid sequence, 404 residues long: Major outer membrane porin (404 aa).

A signal peptide spans 1 to 22; the sequence is MKKLLKSVLAFAVLGSASSLHA. The segment at 85–110 is disordered; the sequence is GPVPTTTDTDAAADITTSTPRENPAY. Positions 89–103 are enriched in low complexity; it reads TTTDTDAAADITTST.

This sequence belongs to the chlamydial porin (CP) (TC 1.B.2) family. In terms of assembly, part of a disulfide cross-linked outer membrane complex (COMC) composed of the major outer membrane porin (MOMP), the small cysteine-rich protein (OmcA) and the large cysteine-rich periplasmic protein (OmcB).

The protein resides in the cell outer membrane. In terms of biological role, in elementary bodies (EBs, the infectious stage, which is able to survive outside the host cell) provides the structural integrity of the outer envelope through disulfide cross-links with the small cysteine-rich protein and the large cysteine-rich periplasmic protein. It has been described in publications as the Sarkosyl-insoluble COMC (Chlamydia outer membrane complex), and serves as the functional equivalent of peptidoglycan. Functionally, permits diffusion of specific solutes through the outer membrane. This Chlamydia muridarum protein is Major outer membrane porin (ompA).